The following is a 57-amino-acid chain: Major exported protein (57 aa).

The protein belongs to the hcp1 family. Homodimer.

The protein resides in the secreted. The polypeptide is Major exported protein (Pseudomonas syringae pv. ribicola).